The sequence spans 160 residues: Leptin (160 aa).

An N-terminal signal peptide occupies residues 1-17; it reads MDYTLALALSLLQLSMC. A disulfide bond links Cys-109 and Cys-160.

This sequence belongs to the leptin family.

It localises to the secreted. May function as part of a signaling pathway that acts to regulate the size of the body fat depot. In Tetraodon nigroviridis (Spotted green pufferfish), this protein is Leptin (lep).